The primary structure comprises 902 residues: Probable dipeptidyl-aminopeptidase B (902 aa).

2 disordered regions span residues 1 to 23 (MTRR…LSVD) and 53 to 72 (DAEA…KLGS). Residues 1–78 (MTRRRSTSGT…KLGSGSRTRQ (78 aa)) lie on the Cytoplasmic side of the membrane. The segment covering 7 to 21 (TSGTSSRSSTDSGLS) has biased composition (low complexity). Residues 79 to 99 (IFWALVILCLGGWVLALVLFL) form a helical; Signal-anchor for type II membrane protein membrane-spanning segment. Residues 100–902 (THGRASSQTA…VKRSVPAFAH (803 aa)) are Vacuolar-facing. 2 N-linked (GlcNAc...) asparagine glycosylation sites follow: Asn-335 and Asn-626. The active-site Charge relay system is the Ser-740. N-linked (GlcNAc...) asparagine glycans are attached at residues Asn-794 and Asn-799. Active-site charge relay system residues include Asp-817 and His-850.

It belongs to the peptidase S9B family.

Its subcellular location is the vacuole membrane. The catalysed reaction is Release of an N-terminal dipeptide, Xaa-Yaa-|-Zaa-, from a polypeptide, preferentially when Yaa is Pro, provided Zaa is neither Pro nor hydroxyproline.. Its function is as follows. Type IV dipeptidyl-peptidase which removes N-terminal dipeptides sequentially from polypeptides having unsubstituted N-termini provided that the penultimate residue is proline. This is Probable dipeptidyl-aminopeptidase B (dapB) from Aspergillus oryzae (strain ATCC 42149 / RIB 40) (Yellow koji mold).